The primary structure comprises 856 residues: DNA mismatch repair protein MutS (856 aa).

An ATP-binding site is contributed by 609-616 (GPNMSGKS).

The protein belongs to the DNA mismatch repair MutS family.

This protein is involved in the repair of mismatches in DNA. It is possible that it carries out the mismatch recognition step. This protein has a weak ATPase activity. This Finegoldia magna (strain ATCC 29328 / DSM 20472 / WAL 2508) (Peptostreptococcus magnus) protein is DNA mismatch repair protein MutS.